The sequence spans 68 residues: Conotoxin VnMMSK-01 (68 aa).

The first 20 residues, 1–20 (MMSKLGVLLTICLLLFPLTA), serve as a signal peptide directing secretion. The propeptide occupies 21-50 (VPMDGDQPADLPALRTQDFEPERSPWFDPV). Intrachain disulfides connect Cys-53/Cys-65, Cys-54/Cys-61, and Cys-58/Cys-64. Pro-63 is modified (4-hydroxyproline).

This sequence belongs to the conotoxin M superfamily. As to expression, expressed by the venom duct.

It localises to the secreted. The polypeptide is Conotoxin VnMMSK-01 (Conus ventricosus (Mediterranean cone)).